A 320-amino-acid polypeptide reads, in one-letter code: Malate dehydrogenase (320 aa).

NAD(+) contacts are provided by residues Gly-10 to Gly-15 and Asp-34. Residues Arg-83 and Arg-89 each contribute to the substrate site. NAD(+) is bound by residues Asn-96 and Ile-119–Asn-121. Substrate is bound by residues Asn-121 and Arg-152. His-176 serves as the catalytic Proton acceptor.

The protein belongs to the LDH/MDH superfamily. MDH type 3 family.

It carries out the reaction (S)-malate + NAD(+) = oxaloacetate + NADH + H(+). In terms of biological role, catalyzes the reversible oxidation of malate to oxaloacetate. The protein is Malate dehydrogenase of Methylobacterium sp. (strain 4-46).